The chain runs to 376 residues: 3-aminomethylindole N-methyltransferase (376 aa).

Residues glycine 220, aspartate 243, aspartate 263, and methionine 264 each contribute to the S-adenosyl-L-homocysteine site.

Belongs to the class I-like SAM-binding methyltransferase superfamily. Cation-independent O-methyltransferase family. More present in the fifth leaf than in the second leaf (at protein level).

The catalysed reaction is 3-(aminomethyl)indole + 2 S-adenosyl-L-methionine = gramine + 2 S-adenosyl-L-homocysteine + 2 H(+). Its pathway is alkaloid biosynthesis. With respect to regulation, repressed by sodium carbonate, sodium bicarbonate and K-phosphate. Methylates 3-aminomethylindole (AMI) and N-methyl-3-aminomethylindole (MAMI), two substrates involved in gramine biosynthesis, a toxic indole alkaloid. Can use S-adenosyl-L-methionine (AdoMet) as a methyl donor. Unable to mediate caffeic acid O-methylation. This chain is 3-aminomethylindole N-methyltransferase, found in Hordeum vulgare subsp. vulgare (Domesticated barley).